Consider the following 372-residue polypeptide: Ciliary neurotrophic factor receptor subunit alpha (372 aa).

Positions 1–22 are cleaved as a signal peptide; the sequence is MAAPVPWACCAVLAAAAAVVYA. Residues 27–104 enclose the Ig-like C2-type domain; that stretch reads PQEAPHVQYE…WHLRHQVLLH (78 aa). Cys46 and Cys89 are joined by a disulfide. N-linked (GlcNAc...) asparagine glycans are attached at residues Asn60, Asn70, Asn142, and Asn190. Fibronectin type-III domains lie at 108-205 and 206-306; these read PPRE…VKPD and PPEN…TEEP. Residues 290–294 carry the WSXWS motif motif; that stretch reads WSDWS. A disordered region spans residues 301–340; it reads PWTEEPRHLTTEAQAAETTTSTTSSLAPPPTTKICDPGEL. The span at 311–326 shows a compositional bias: low complexity; it reads TEAQAAETTTSTTSSL. A lipid anchor (GPI-anchor amidated serine) is attached at Ser342. Positions 343–372 are cleaved as a propeptide — removed in mature form; it reads GGGPSAPFLVSVPITLALAAAAATASSLLI.

It belongs to the type I cytokine receptor family. Type 3 subfamily. As to quaternary structure, forms a heterotrimer with LIFR and IL6ST. Interacts with heterodimeric neurotropic cytokine composed of CLCF1/CLC and CRLF1/CLF-1. Either alone or in complex with the heterodimer CLCF1-CRLF1 interacts with SORL1; this interaction may promote internalization and lysosomal degradation. Component of a receptor complex composed of IL6ST/GP130, IL27RA/WSX1 and CNTFR which interacts with the neuroprotective peptide humanin. As to expression, nervous system and skeletal muscle.

The protein resides in the cell membrane. Binds to CNTF. The alpha subunit provides the receptor specificity. Receptor for heterodimeric neurotropic cytokine composed of CLCF1/CLC and CRLF1/CLF-1. Acts as a receptor for the neuroprotective peptide humanin as part of a complex with IL6ST/GP130 and IL27RA/WSX1. This Homo sapiens (Human) protein is Ciliary neurotrophic factor receptor subunit alpha (CNTFR).